We begin with the raw amino-acid sequence, 220 residues long: NADH-quinone oxidoreductase subunit I (220 aa).

4Fe-4S ferredoxin-type domains follow at residues 71–102 (LQRL…IITH) and 112–141 (DSYT…MGNR). Residues C82, C85, C88, C92, C121, C124, C127, and C131 each contribute to the [4Fe-4S] cluster site. The interval 187–220 (MQATPLDYVQEPSKEESKEETPTNPESNKGDENV) is disordered. A compositionally biased stretch (basic and acidic residues) spans 198–207 (PSKEESKEET).

The protein belongs to the complex I 23 kDa subunit family. NDH-1 is composed of 14 different subunits. Subunits NuoA, H, J, K, L, M, N constitute the membrane sector of the complex. [4Fe-4S] cluster is required as a cofactor.

The protein localises to the cell inner membrane. The catalysed reaction is a quinone + NADH + 5 H(+)(in) = a quinol + NAD(+) + 4 H(+)(out). In terms of biological role, NDH-1 shuttles electrons from NADH, via FMN and iron-sulfur (Fe-S) centers, to quinones in the respiratory chain. The immediate electron acceptor for the enzyme in this species is believed to be ubiquinone. Couples the redox reaction to proton translocation (for every two electrons transferred, four hydrogen ions are translocated across the cytoplasmic membrane), and thus conserves the redox energy in a proton gradient. The protein is NADH-quinone oxidoreductase subunit I of Helicobacter pylori (strain Shi470).